The chain runs to 120 residues: Large ribosomal subunit protein bL17 (120 aa).

The protein belongs to the bacterial ribosomal protein bL17 family. In terms of assembly, part of the 50S ribosomal subunit. Contacts protein L32.

In Geobacillus sp. (strain WCH70), this protein is Large ribosomal subunit protein bL17.